Consider the following 282-residue polypeptide: MTNLPKVTVRDLAESGVHFGHKISRWNAKIAPYIYGVHQENRIHIIDLRKTLPLLQVAMKVLYDVAFQGGRILFVGTKFQAFDIIASEAIRCGQYYVNHRWLGGMLTNWGTVSSSIKTLMQYEKILNDEDSILTKKELGNIEKKKQKLDKALGGIREMGAIPDILFIIDTNKEHIAVKEAKKLGIPIVAILDTNSDPDGITYLIPGNDDSRKSIELYCKLATDSILAGIESSLAKSGVKIDDIRGDEFIQEKEDGIVQTKRRRSKVYKEEEREVVTNEDESR.

The tract at residues 260–282 (KRRRSKVYKEEEREVVTNEDESR) is disordered. Basic and acidic residues predominate over residues 266–282 (VYKEEEREVVTNEDESR).

Belongs to the universal ribosomal protein uS2 family.

In Wolbachia sp. subsp. Drosophila simulans (strain wRi), this protein is Small ribosomal subunit protein uS2.